Here is a 526-residue protein sequence, read N- to C-terminus: ATP synthase subunit alpha (526 aa).

Glycine 171–threonine 178 serves as a coordination point for ATP.

This sequence belongs to the ATPase alpha/beta chains family. In terms of assembly, F-type ATPases have 2 components, CF(1) - the catalytic core - and CF(0) - the membrane proton channel. CF(1) has five subunits: alpha(3), beta(3), gamma(1), delta(1), epsilon(1). CF(0) has four main subunits: a(1), b(1), b'(1) and c(9-12).

It is found in the cell inner membrane. It catalyses the reaction ATP + H2O + 4 H(+)(in) = ADP + phosphate + 5 H(+)(out). Its function is as follows. Produces ATP from ADP in the presence of a proton gradient across the membrane. The alpha chain is a regulatory subunit. This chain is ATP synthase subunit alpha, found in Chlorobaculum tepidum (strain ATCC 49652 / DSM 12025 / NBRC 103806 / TLS) (Chlorobium tepidum).